The sequence spans 36 residues: Inactive anti-CBASS 2 protein (36 aa).

Belongs to the Acb2 family.

A naturally occurring inactive form of this protein. Upon mutation by a single nucleotide change (changes the stop codon to Gln) inhibits CBASS immunity; most closely related viruses encode a long version of this protein. The long (mutated) version antagonizes the effector protein of host type II-A CBASS immunity by binding the second messenger 3',3'-cyclic GMP-AMP (cGAMP) and sequestering it (thus preventing host CapV activation) without degrading the cyclic nucleotide. The mutated version also antagonizes the effector protein of P.aeruginosa type I-A and type I-B CBASS systems. This Pseudomonas phage PaMx41 protein is Inactive anti-CBASS 2 protein.